The chain runs to 264 residues: Proteasome subunit alpha type-4 (264 aa).

This sequence belongs to the peptidase T1A family. As to quaternary structure, the 26S proteasome consists of a 20S proteasome core and two 19S regulatory subunits. The 20S proteasome core is composed of 28 subunits that are arranged in four stacked rings, resulting in a barrel-shaped structure. The two end rings are each formed by seven alpha subunits, and the two central rings are each formed by seven beta subunits. The catalytic chamber with the active sites is on the inside of the barrel. Interacts with PI31.

The protein localises to the cytoplasm. It is found in the nucleus. Its function is as follows. The proteasome is a multicatalytic proteinase complex which is characterized by its ability to cleave peptides with Arg, Phe, Tyr, Leu, and Glu adjacent to the leaving group at neutral or slightly basic pH. The proteasome has an ATP-dependent proteolytic activity. The chain is Proteasome subunit alpha type-4 (Prosalpha3) from Drosophila melanogaster (Fruit fly).